The following is a 213-amino-acid chain: Urease accessory protein UreE (213 aa).

A disordered region spans residues 170-213; the sequence is EHHGRSHSHSHSHSHDHDHDHDHDHDHDHQHGPSCSHGHGHGHR. Over residues 182–200 the composition is skewed to basic and acidic residues; that stretch reads HSHDHDHDHDHDHDHDHQH.

It belongs to the UreE family.

It is found in the cytoplasm. Functionally, involved in urease metallocenter assembly. Binds nickel. Probably functions as a nickel donor during metallocenter assembly. In Burkholderia thailandensis (strain ATCC 700388 / DSM 13276 / CCUG 48851 / CIP 106301 / E264), this protein is Urease accessory protein UreE.